A 691-amino-acid polypeptide reads, in one-letter code: Elongation factor G (691 aa).

The tr-type G domain maps to 8–283 (EDYRNFGIMA…AVVDFLPNPT (276 aa)). Residues 17-24 (AHIDAGKT), 81-85 (DTPGH), and 135-138 (NKMD) contribute to the GTP site.

It belongs to the TRAFAC class translation factor GTPase superfamily. Classic translation factor GTPase family. EF-G/EF-2 subfamily.

It is found in the cytoplasm. Catalyzes the GTP-dependent ribosomal translocation step during translation elongation. During this step, the ribosome changes from the pre-translocational (PRE) to the post-translocational (POST) state as the newly formed A-site-bound peptidyl-tRNA and P-site-bound deacylated tRNA move to the P and E sites, respectively. Catalyzes the coordinated movement of the two tRNA molecules, the mRNA and conformational changes in the ribosome. This is Elongation factor G from Maricaulis maris (strain MCS10) (Caulobacter maris).